The following is a 149-amino-acid chain: Ribonuclease pancreatic (149 aa).

The N-terminal stretch at 1 to 25 is a signal peptide; the sequence is MGLENSLILFSLLVLVLGWVQPSLG. The interval 25 to 62 is disordered; that stretch reads GKESSPDKFKRQHMDTEGSSKSSPTYCNQMRSPQEMTK. Over residues 28–42 the composition is skewed to basic and acidic residues; that stretch reads SSPDKFKRQHMDTEG. Residues K32 and R35 each contribute to the substrate site. H37 acts as the Proton acceptor in catalysis. Over residues 43 to 61 the composition is skewed to polar residues; it reads SSKSSPTYCNQMRSPQEMT. 4 disulfide bridges follow: C51–C109, C65–C120, C83–C135, and C90–C97. Residues 66–70 and K91 each bind substrate; that span reads KPVNT. Catalysis depends on H144, which acts as the Proton donor.

The protein belongs to the pancreatic ribonuclease family. In terms of assembly, monomer. Interacts with and forms tight 1:1 complexes with RNH1. Dimerization of two such complexes may occur. Interaction with RNH1 inhibits this protein.

The protein localises to the secreted. It catalyses the reaction an [RNA] containing cytidine + H2O = an [RNA]-3'-cytidine-3'-phosphate + a 5'-hydroxy-ribonucleotide-3'-[RNA].. It carries out the reaction an [RNA] containing uridine + H2O = an [RNA]-3'-uridine-3'-phosphate + a 5'-hydroxy-ribonucleotide-3'-[RNA].. In terms of biological role, endonuclease that catalyzes the cleavage of RNA on the 3' side of pyrimidine nucleotides. Acts on single-stranded and double-stranded RNA. In Sundamys muelleri (Mueller's giant sunda rat), this protein is Ribonuclease pancreatic (RNASE1).